The chain runs to 214 residues: UPF0690 protein C1orf52 homolog (214 aa).

Disordered regions lie at residues 1 to 66 (MSDE…SVSK) and 81 to 214 (DSRA…QCLD). Residues 32-44 (PEATASSAPAEPQ) are compositionally biased toward low complexity. Basic and acidic residues-rich tracts occupy residues 49-61 (RAAEPLPRPDELF) and 81-97 (DSRAVRAPEEPPKEFKV). Over residues 152 to 165 (EEEEEEQQPDSDDD) the composition is skewed to acidic residues. Serine 162 bears the Phosphoserine mark. Composition is skewed to basic and acidic residues over residues 179-192 (VETFQQKEKRKRDI) and 200-214 (NFVEEEKRILRQCLD).

This sequence belongs to the UPF0690 family.

In Danio rerio (Zebrafish), this protein is UPF0690 protein C1orf52 homolog.